We begin with the raw amino-acid sequence, 48 residues long: U-actitoxin-Cgg3 (48 aa).

Intrachain disulfides connect cysteine 5-cysteine 41, cysteine 7-cysteine 33, and cysteine 23-cysteine 42. Serine 46 bears the Serine amide mark. Residues 47–48 (GR) constitute a propeptide, removed in mature form.

The protein belongs to the sea anemone type 3 (BDS) potassium channel toxin family.

Its subcellular location is the secreted. In terms of biological role, neurotoxin that induces paralysis when injected into crabs. May function in antimicrobial activity as it displays inhibitory activity towards the B.licheniformis enzyme subtilisin A (SUBTA) and the recombinant S.maltophilia protease 1 (rStmPr1) enzyme. Also displays inhibitory activity against various proteases including the porcine pancreatic elastase (PPE) and proteinase K (PK). The sequence is that of U-actitoxin-Cgg3 from Condylactis gigantea (Giant Caribbean anemone).